The following is a 514-amino-acid chain: MTTAKRPLALLILDGWGYRENTHNNAIFHANTPVLDRLNAQYPHSLISGSGLDVGLPDGQMGNSEVGHINLGSGRVVYQELTRISKAIADHEFEQNPALCDAVDSAIKAGGAVHIMGLLSPGGVHSHEEHIEAMCRMAVARGATKVYLHAFLDGRDTPPRSAKSSLSHFDDLFTTLGHGRIASIIGRYFAMDRDNRWDRVSQAYDLITQGKSKFQYDNAVTALEAAYERNENDEFVSSSAITDADGQVATLQDGDALIFMNFRADRARQITRSFINPDFDGFERAVVPKMHFVTLTEYAGDIKAPIAYPSENLVNTLGEVLQKQGRTQLRISETEKYAHVTFFFNGGKEEPFEGEDRILINSPKVATYDLQPEMSSAELTDKLVAAIESTKYDVIICNYPNGDMVGHTGNFDAAVKACEAVDACIGCVVDALAKVGGECIITADHGNAEQMTDETTGQAHTAHTSELVPFVFVGRDATIDEGGKLSDVAPTILTLIGEAIPAEMTGKPLIHIKE.

Mn(2+) is bound by residues aspartate 14 and serine 64. Serine 64 functions as the Phosphoserine intermediate in the catalytic mechanism. Substrate-binding positions include histidine 125, 155 to 156 (RD), arginine 187, arginine 193, 263 to 266 (RADR), and lysine 336. Positions 403, 407, 444, 445, and 463 each coordinate Mn(2+).

Belongs to the BPG-independent phosphoglycerate mutase family. As to quaternary structure, monomer. Mn(2+) serves as cofactor.

It carries out the reaction (2R)-2-phosphoglycerate = (2R)-3-phosphoglycerate. The protein operates within carbohydrate degradation; glycolysis; pyruvate from D-glyceraldehyde 3-phosphate: step 3/5. Its function is as follows. Catalyzes the interconversion of 2-phosphoglycerate and 3-phosphoglycerate. This is 2,3-bisphosphoglycerate-independent phosphoglycerate mutase from Shewanella baltica (strain OS195).